A 422-amino-acid polypeptide reads, in one-letter code: Glycine amidinotransferase, mitochondrial (422 aa).

Active-site residues include D253 and H302. The Amidino-cysteine intermediate role is filled by C406.

The protein belongs to the amidinotransferase family. In terms of assembly, homodimer. As to expression, strongly expressed in neurons and glia of the brain, the lamina propria, submucosa and serosa of the small intestine, in oocytes and on the fringes of the pancreas. Not expressed in the retina, eye lens, heart or bulbus arteriosus. Expressed in the yolk syncytial layer in gastrula stage embryos, in the yolk syncytial layer and mature somites in early segmentation embryos and in the yolk syncytial layer and the liver of long-pec stage (48 hours post-fertilization) embryos.

Its subcellular location is the mitochondrion inner membrane. It catalyses the reaction L-arginine + glycine = guanidinoacetate + L-ornithine. Its pathway is amine and polyamine biosynthesis; creatine biosynthesis; creatine from L-arginine and glycine: step 1/2. Its function is as follows. Catalyzes the biosynthesis of guanidinoacetate, the immediate precursor of creatine. Creatine plays a vital role in energy metabolism in muscle tissues. May play a role in embryonic and central nervous system development. The polypeptide is Glycine amidinotransferase, mitochondrial (Danio rerio (Zebrafish)).